A 305-amino-acid polypeptide reads, in one-letter code: MHKFLPIAYFEDKFVPFEDAKISVATHALHYGTAAFGGLRGIPDPEDPGTILLFRLDRHGDRLSKSAKFLHYDISAEKIKEVIVDFVKKNQPDKSFYIRPLVYSSGLGIAPRLHNLEKDFLVYGLEMGDYLAADGVSCRISSWYRQEDRSFPLRGKISAAYITSALAKTEAVESGFDEAILMNSQGKVCEATGMNVFMVRNGQIVTPGNEQDILEGITRDSILTIAADLGIPTCQRPIDKSELMIADEVFLSGTAAKITPVKRIENFTLGGDRPITEKLRSVLTAVTENREPKYQDWVFKIPLNG.

Lys156 carries the N6-(pyridoxal phosphate)lysine modification.

The protein belongs to the class-IV pyridoxal-phosphate-dependent aminotransferase family. It depends on pyridoxal 5'-phosphate as a cofactor.

The enzyme catalyses L-leucine + 2-oxoglutarate = 4-methyl-2-oxopentanoate + L-glutamate. It carries out the reaction L-isoleucine + 2-oxoglutarate = (S)-3-methyl-2-oxopentanoate + L-glutamate. It catalyses the reaction L-valine + 2-oxoglutarate = 3-methyl-2-oxobutanoate + L-glutamate. It participates in amino-acid biosynthesis; L-isoleucine biosynthesis; L-isoleucine from 2-oxobutanoate: step 4/4. Its pathway is amino-acid biosynthesis; L-leucine biosynthesis; L-leucine from 3-methyl-2-oxobutanoate: step 4/4. The protein operates within amino-acid biosynthesis; L-valine biosynthesis; L-valine from pyruvate: step 4/4. Acts on leucine, isoleucine and valine. In Synechocystis sp. (strain ATCC 27184 / PCC 6803 / Kazusa), this protein is Probable branched-chain-amino-acid aminotransferase (ilvE).